The following is a 186-amino-acid chain: uncharacterized protein (186 aa).

Positions 156 to 186 (DTKELERTTQPPEHQKHHQEPREKRGMNKRD) are disordered. Residues 173 to 186 (HQEPREKRGMNKRD) are compositionally biased toward basic and acidic residues.

This is an uncharacterized protein from Bacillus subtilis (strain 168).